The chain runs to 706 residues: Envelope glycoprotein H (706 aa).

The N-terminal stretch at 1–18 (MQLLCVFCLVLLWEVGAA) is a signal peptide. Residues 19-682 (SLSEVKLHLD…LYEERAHVVL (664 aa)) are Virion surface-facing. Residue Asn-60 is glycosylated (N-linked (GlcNAc...) asparagine; by host). The interval 165–229 (DKFQYTGAMT…QSGDYSLVIV (65 aa)) is interaction with gL. Residues Cys-278 and Cys-335 are joined by a disulfide bond. Residue Asn-435 is glycosylated (N-linked (GlcNAc...) asparagine; by host). 2 disulfide bridges follow: Cys-454–Cys-478 and Cys-534–Cys-587. Asn-549 and Asn-604 each carry an N-linked (GlcNAc...) asparagine; by host glycan. Cys-612 and Cys-615 form a disulfide bridge. Asn-664 carries N-linked (GlcNAc...) asparagine; by host glycosylation. Residues 683–703 (AIILYFIAFALGIFLVHKIVM) traverse the membrane as a helical segment. The Intravirion segment spans residues 704–706 (FFL).

It belongs to the herpesviridae glycoprotein H family. As to quaternary structure, interacts with glycoprotein L (gL); this interaction is necessary for the correct processing and cell surface expression of gH. The heterodimer gH/gL seems to interact with gB trimers during fusion. The heterodimer gH/gL interacts with host EPHA2 to facilitate virus internalization and fusion. Interacts with glycoprotein 42/BZLF2. N-glycosylated, O-glycosylated, and sialylated.

The protein resides in the virion membrane. Its subcellular location is the host cell membrane. It localises to the host endosome membrane. Its function is as follows. The heterodimer glycoprotein H-glycoprotein L is required for the fusion of viral and plasma membranes leading to virus entry into the host cell. Following initial binding to host receptor, membrane fusion is mediated by the fusion machinery composed of gB and the heterodimer gH/gL. May also be involved in the fusion between the virion envelope and the outer nuclear membrane during virion morphogenesis. The heterodimer gH/gL targets also host EPHA2 to promote viral entry. The polypeptide is Envelope glycoprotein H (Homo sapiens (Human)).